The chain runs to 1871 residues: MANLEESFPRGGTRKIHKPEKAFQQSVEQDNLFDISTEEGSTKRKKSQKGPAKTKKLKIEKRESSKSAREKFEILSVESLCEGMRILGCVKEVNELELVISLPNGLQGFVQVTEICDAYTKKLNEQVTQEQPLKDLLHLPELFSPGMLVRCVVSSLGITDRGKKSVKLSLNPKNVNRVLSAEALKPGMLLTGTVSSLEDHGYLVDIGVDGTRAFLPLLKAQEYIRQKNKGAKLKVGQYLNCIVEKVKGNGGVVSLSVGHSEVSTAIATEQQSWNLNNLLPGLVVKAQVQKVTPFGLTLNFLTFFTGVVDFMHLDPKKAGTYFSNQAVRACILCVHPRTRVVHLSLRPIFLQPGRPLTRLSCQNLGAVLDDVPVQGFFKKAGATFRLKDGVLAYARLSHLSDSKNVFNPEAFKPGNTHKCRIIDYSQMDELALLSLRTSIIEAQYLRYHDIEPGAVVKGTVLTIKSYGMLVKVGEQMRGLVPPMHLADILMKNPEKKYHIGDEVKCRVLLCDPEAKKLMMTLKKTLIESKLPVITCYADAKPGLQTHGFIIRVKDYGCIVKFYNNVQGLVPKHELSTEYIPDPERVFYTGQVVKVVVLNCEPSKERMLLSFKLSSDPEPKKEPAGHSQKKGKAINIGQLVDVKVLEKTKDGLEVAVLPHNIRAFLPTSHLSDHVANGPLLHHWLQAGDILHRVLCLSQSEGRVLLCRKPALVSTVEGGQDPKNFSEIHPGMLLIGFVKSIKDYGVFIQFPSGLSGLAPKAIMSDKFVTSTSDHFVEGQTVAAKVTNVDEEKQRMLLSLRLSDCGLGDLAITSLLLLNQCLEELQGVRSLMSNRDSVLIQTLAEMTPGMFLDLVVQEVLEDGSVVFSGGPVPDLVLKASRYHRAGQEVESGQKKKVVILNVDLLKLEVHVSLHQDLVNRKARKLRKGSEHQAIVQHLEKSFAIASLVETGHLAAFSLTSHLNDTFRFDSEKLQVGQGVSLTLKTTEPGVTGLLLAVEGPAAKRTMRPTQKDSETVDEDEEVDPALTVGTIKKHTLSIGDMVTGTVKSIKPTHVVVTLEDGIIGCIHASHILDDVPEGTSPTTKLKVGKTVTARVIGGRDMKTFKYLPISHPRFVRTIPELSVRPSELEDGHTALNTHSVSPMEKIKQYQAGQTVTCFLKKYNVVKKWLEVEIAPDIRGRIPLLLTSLSFKVLKHPDKKFRVGQALRATVVGPDSSKTLLCLSLTGPHKLEEGEVAMGRVVKVTPNEGLTVSFPFGKIGTVSIFHMSDSYSETPLEDFVPQKVVRCYILSTADNVLTLSLRSSRTNPETKSKVEDPEINSIQDIKEGQLLRGYVGSIQPHGVFFRLGPSVVGLARYSHVSQHSPSKKALYNKHLPEGKLLTARVLRLNHQKNLVELSFLPGDTGKPDVLSASLEGQLTKQEERKTEAEERDQKGEKKNQKRNEKKNQKGQEEVEMPSKEKQQPQKPQAQKRGGRECRESGSEQERVSKKPKKAGLSEEDDSLVDVYYREGKEEAEETNVLPKEKQTKPAEAPRLQLSSGFAWNVGLDSLTPALPPLAESSDSEEDEKPHQATIKKSKKERELEKQKAEKELSRIEEALMDPGRQPESADDFDRLVLSSPNSSILWLQYMAFHLQATEIEKARAVAERALKTISFREEQEKLNVWVALLNLENMYGSQESLTKVFERAVQYNEPLKVFLHLADIYAKSEKFQEAGELYNRMLKRFRQEKAVWIKYGAFLLRRSQAAASHRVLQRALECLPSKEHVDVIAKFAQLEFQLGDAERAKAIFENTLSTYPKRTDVWSVYIDMTIKHGSQKDVRDIFERVIHLSLAPKRMKFFFKRYLDYEKQHGTEKDVQAVKAKALEYVEAKSSVLED.

A disordered region spans residues 1 to 62 (MANLEESFPR…KTKKLKIEKR (62 aa)). Ala2 is subject to N-acetylalanine. Residue Ser7 is modified to Phosphoserine. A compositionally biased stretch (basic residues) spans 43–59 (KRKKSQKGPAKTKKLKI). S1 motif domains follow at residues 83 to 171 (GMRI…LSLN), 187 to 258 (GMLL…LSVG), 281 to 346 (GLVV…LSLR), and 365 to 436 (GAVL…LSLR). Ser438 is modified (phosphoserine). 4 consecutive S1 motif domains span residues 453 to 522 (GAVV…MTLK), 542 to 611 (GLQT…LSFK), 636 to 707 (GQLV…LCRK), and 729 to 798 (GMLL…LSLR). A disordered region spans residues 998 to 1018 (AAKRTMRPTQKDSETVDEDEE). Lys1030 is covalently cross-linked (Glycyl lysine isopeptide (Lys-Gly) (interchain with G-Cter in SUMO1)). S1 motif domains lie at 1036–1109 (GDMV…ISHP), 1149–1222 (GQTV…LSLT), 1230–1298 (GEVA…LSLR), and 1324–1396 (GQLL…LSFL). A phosphoserine mark is found at Ser1360 and Ser1362. Disordered regions lie at residues 1395 to 1531 (FLPG…APRL) and 1549 to 1586 (ALPP…KAEK). Lys1416 participates in a covalent cross-link: Glycyl lysine isopeptide (Lys-Gly) (interchain with G-Cter in SUMO2). Basic and acidic residues-rich tracts occupy residues 1416–1459 (KQEE…EKQQ) and 1469–1484 (GGRE…ERVS). 3 positions are modified to phosphoserine: Ser1476, Ser1493, and Ser1498. A compositionally biased stretch (basic and acidic residues) spans 1575–1586 (KERELEKQKAEK). HAT repeat units lie at residues 1599–1631 (GRQP…FHLQ), 1705–1737 (EKFQ…FLLR), 1775–1807 (GDAE…MTIK), and 1809–1844 (GSQK…YEKQ).

Interacts with NF-kappa-B p50/NFKB1 and NF-kappa-B p65/RELA.

Its subcellular location is the nucleus. The protein localises to the nucleolus. Essential for the generation of mature 18S rRNA, specifically necessary for cleavages at sites A0, 1 and 2 of the 47S precursor. Directly interacts with U3 snoRNA. Functionally, involved in the biogenesis of rRNA. The sequence is that of Protein RRP5 homolog (PDCD11) from Homo sapiens (Human).